A 1004-amino-acid polypeptide reads, in one-letter code: Protein phosphatase 1 regulatory subunit 12A (1004 aa).

The segment at 35–38 is important for interaction with PPP1CB; that stretch reads KVKF. ANK repeat units lie at residues 39-68, 72-101, 105-134, 138-164, 198-227, and 231-260; these read DDGA…DINY, DGLT…NINQ, EGWI…HVGA, EGDT…RQGV, SGGT…DVNI, and DGWT…DMEA. The segment covering 291 to 300 has biased composition (basic and acidic residues); that stretch reads HSEKREKKSP. The interval 291-920 is disordered; the sequence is HSEKREKKSP…SYLEDRKPYC (630 aa). A compositionally biased stretch (polar residues) spans 302 to 316; that stretch reads IESTANLDNNQTQKT. Basic and acidic residues-rich tracts occupy residues 318–329 and 336–353; these read KNKETLIMEQEK and SLEH…KDES. Acidic residues predominate over residues 357 to 369; the sequence is SEEEEDDDSESEA. Residues 378-392 show a composition bias toward polar residues; it reads ANANTTSTQSASMTA. The span at 417–427 shows a compositional bias: basic and acidic residues; that stretch reads SPKEEERKDES. Residues 464–475 show a composition bias toward low complexity; it reads RSASSPRLSSSL. The segment covering 476–486 has biased composition (basic and acidic residues); that stretch reads DNKEKEKDGKG. Residues 514 to 525 are compositionally biased toward low complexity; it reads SSASSIRSGSSY. Residues 528 to 538 are compositionally biased toward basic and acidic residues; that stretch reads RKWEEDVKKNS. The segment covering 539–554 has biased composition (polar residues); it reads LNEGPTSLNTSYQRSG. Low complexity-rich tracts occupy residues 564-578 and 587-602; these read VSSN…VTSS and ASAN…STSA. Residues 613 to 624 show a composition bias toward basic and acidic residues; that stretch reads WAEDSTEKEKDS. Positions 625-659 are enriched in low complexity; sequence VPTAVTVPVAPSVVNAAATTTAMTTATSGTVSSTS. Residues 672–681 show a composition bias toward basic and acidic residues; it reads VRDEESESQR. The segment covering 682-692 has biased composition (basic residues); the sequence is KARSRQARQSR. The residue at position 695 (Thr-695) is a Phosphothreonine; by ROCK2. Over residues 717-765 the composition is skewed to basic and acidic residues; that stretch reads RTREQENEEKEKEEKEKQDKEKQEEKKESETKDDDYRQRYSRTVEEPYH. The segment covering 770-793 has biased composition (low complexity); that stretch reads TSTSTSTSSTSSLSTSTSSLSSSS. The span at 794 to 808 shows a compositional bias: polar residues; sequence QLNRPNSLIGITSAY. Residues 812–837 are compositionally biased toward basic and acidic residues; the sequence is GTKESEREGGKKEEEKEEDKSQPKSI. A compositionally biased stretch (basic residues) spans 838-849; that stretch reads RERRRPREKRRS. Thr-850 bears the Phosphothreonine; by ROCK2 mark. The span at 864 to 880 shows a compositional bias: basic and acidic residues; that stretch reads QEHQSDSEEGTNKKETQ. A compositionally biased stretch (polar residues) spans 881 to 896; the sequence is SDSLSRYDTGSLSVSS.

In terms of assembly, PP1 comprises a catalytic subunit, PPP1CA, PPP1CB or PPP1CC, and one or several targeting or regulatory subunits. PPP1R12A mediates binding to myosin. In terms of processing, phosphorylated by CIT (Rho-associated kinase) and by ROCK2 on serine and threonine residues. Phosphorylation at Thr-695 leads to inhibition of myosin phosphatase activity. Phosphorylation at Thr-850 abolishes myosin binding. May be phosphorylated at Thr-695 by DMPK; may inhibit the myosin phosphatase activity. As to expression, detected in brain, lung, aorta, heart, gizzard, stomach, oviduct, spleen, kidney and small intestine.

It is found in the cytoplasm. It localises to the cytoskeleton. The protein resides in the stress fiber. Functionally, regulates myosin phosphatase activity. In Gallus gallus (Chicken), this protein is Protein phosphatase 1 regulatory subunit 12A (PPP1R12A).